The chain runs to 217 residues: GRB2-related adapter protein (217 aa).

The SH3 1 domain occupies 1–58; sequence MESVALYSFQATESDELAFNKGDTLKILNMEDDQNWYKAELRGAEGFVPKNYIRLKPH. Positions 60-152 constitute an SH2 domain; sequence WYSGRISRQL…KRQVFLQDEE (93 aa). The SH3 2 domain maps to 158-217; sequence PRACFAQAQFDFSAQDPSQLSFRRGDIIEVLERLDPSWWRGRLSGRIGFFPRSYVQPVHM.

It belongs to the GRB2/sem-5/DRK family. Associates through its SH2 domain with ligand-activated receptors for stem cell factor (KIT) and erythropoietin (EPOR). Also forms a stable complex with the Bcr-Abl oncoprotein. GRAP is associated with the Ras guanine nucleotide exchange factor SOS1, primarily through its N-terminal SH3 domain. Interacts with phosphorylated LAT upon TCR activation. Interacts with SHB.

The protein localises to the membrane. It localises to the synapse. Couples signals from receptor and cytoplasmic tyrosine kinases to the Ras signaling pathway. Plays a role in the inner ear and in hearing. The protein is GRB2-related adapter protein (GRAP) of Bos taurus (Bovine).